Reading from the N-terminus, the 270-residue chain is Protein-ADP-ribose hydrolase (270 aa).

The 195-residue stretch at 73-267 folds into the Macro domain; sequence VSVKDCQKTN…LYDTYLQKEN (195 aa). ADP-D-ribose contacts are provided by Asp92, Ile93, and Asn106. Cys112, His117, and Cys119 together coordinate Zn(2+). Cys119, Ile120, Asp121, Ser212, Thr213, Gly214, Glu215, and Phe216 together coordinate ADP-D-ribose.

This sequence belongs to the MacroD-type family. Zn-Macro subfamily. It depends on Zn(2+) as a cofactor.

The enzyme catalyses 4-O-(ADP-D-ribosyl)-L-aspartyl-[protein] + H2O = L-aspartyl-[protein] + ADP-D-ribose + H(+). Functionally, ADP-ribosylhydrolase that specifically reverses the SirTM-mediated mono-ADP-ribosylation at an asparatate residue of GcvH-L, by releasing ADP-ribose from the target protein. May play a role in the regulation of the response to host-induced oxidative stress. The protein is Protein-ADP-ribose hydrolase of Streptococcus pyogenes serotype M18 (strain MGAS8232).